Consider the following 257-residue polypeptide: 3-dehydroquinate dehydratase (257 aa).

Residues 50–52 (EWR) and R86 contribute to the 3-dehydroquinate site. H147 serves as the catalytic Proton donor/acceptor. The active-site Schiff-base intermediate with substrate is K174. 3-dehydroquinate contacts are provided by R216, S235, and Q239.

It belongs to the type-I 3-dehydroquinase family. Homodimer.

It carries out the reaction 3-dehydroquinate = 3-dehydroshikimate + H2O. It participates in metabolic intermediate biosynthesis; chorismate biosynthesis; chorismate from D-erythrose 4-phosphate and phosphoenolpyruvate: step 3/7. In terms of biological role, involved in the third step of the chorismate pathway, which leads to the biosynthesis of aromatic amino acids. Catalyzes the cis-dehydration of 3-dehydroquinate (DHQ) and introduces the first double bond of the aromatic ring to yield 3-dehydroshikimate. This Geobacillus thermodenitrificans (strain NG80-2) protein is 3-dehydroquinate dehydratase.